A 286-amino-acid chain; its full sequence is Interferon-induced 35 kDa protein (286 aa).

The tract at residues 5-26 (LDAALHALQEEQARLKMRLWDL) is leucine-zipper. 2 consecutive NID domains span residues 81–170 (ALIT…GDVD) and 183–266 (FARD…GEVE).

The protein belongs to the NMI family. In terms of assembly, homodimer. Also interacts with BATF. Interacts with TRIM21. Interacts with NMI; the interaction is direct and is facilitated by TRIM21. In terms of processing, phosphorylated. Dephosphorylation correlates with the formation of a complex with NMI. Expressed in a wide range of cell types, including fibroblasts, macrophages, and epithelial cells.

Its subcellular location is the cytoplasm. The protein localises to the nucleus. It localises to the secreted. Its function is as follows. Acts as a signaling pathway regulator involved in innate immune system response. In response to interferon IFN-alpha, associates in a complex with signaling pathway regulator NMI to regulate immune response; the complex formation prevents proteasome-mediated degradation of IFI35 and correlates with IFI35 dephosphorylation. In complex with NMI, inhibits virus-triggered type I interferon/IFN-beta production. In complex with NMI, negatively regulates nuclear factor NF-kappa-B signaling by inhibiting the nuclear translocation, activation and transcription of the NF-kappa-B subunit p65/RELA, resulting in the inhibition of endothelial cell proliferation, migration and re-endothelialization of injured arteries. Beside its role as an intracellular signaling pathway regulator, also functions extracellularly as damage-associated molecular patterns (DAMPs) to promote inflammation when actively released by macrophage to the extracellular space during cell injury and pathogen invasion. Macrophage-secreted IFI35 activates NF-kappa-B signaling in adjacent macrophages through Toll-like receptor 4/TLR4 activation, thereby inducing NF-kappa-B translocation from the cytoplasm into the nucleus which promotes the release of pro-inflammatory cytokines. The chain is Interferon-induced 35 kDa protein from Homo sapiens (Human).